Consider the following 310-residue polypeptide: Ribosomal RNA small subunit methyltransferase H (310 aa).

S-adenosyl-L-methionine is bound by residues 32–34 (GGH), D52, F79, D100, and Q107.

The protein belongs to the methyltransferase superfamily. RsmH family.

Its subcellular location is the cytoplasm. The enzyme catalyses cytidine(1402) in 16S rRNA + S-adenosyl-L-methionine = N(4)-methylcytidine(1402) in 16S rRNA + S-adenosyl-L-homocysteine + H(+). Specifically methylates the N4 position of cytidine in position 1402 (C1402) of 16S rRNA. This is Ribosomal RNA small subunit methyltransferase H from Geobacillus thermodenitrificans (strain NG80-2).